Here is a 394-residue protein sequence, read N- to C-terminus: Deoxyguanosinetriphosphate triphosphohydrolase-like protein (394 aa).

The segment at 1 to 36 (MSQAPYFVPRAPYAEDPSKSKGRRFKEDESRTRTPF) is disordered. Basic and acidic residues predominate over residues 25–36 (FKEDESRTRTPF). The HD domain occupies 70–210 (RLTHTLEVAQ…AALADDIAYN (141 aa)).

This sequence belongs to the dGTPase family. Type 2 subfamily.

The chain is Deoxyguanosinetriphosphate triphosphohydrolase-like protein from Caulobacter vibrioides (strain ATCC 19089 / CIP 103742 / CB 15) (Caulobacter crescentus).